We begin with the raw amino-acid sequence, 468 residues long: Cysteine--tRNA ligase (468 aa).

Residue Cys-28 coordinates Zn(2+). Residues 30–40 (PTVYNYIHIGN) carry the 'HIGH' region motif. Cys-212, His-237, and Glu-241 together coordinate Zn(2+). The short motif at 271–275 (KMSKS) is the 'KMSKS' region element. Lys-274 contributes to the ATP binding site.

The protein belongs to the class-I aminoacyl-tRNA synthetase family. In terms of assembly, monomer. The cofactor is Zn(2+).

Its subcellular location is the cytoplasm. It catalyses the reaction tRNA(Cys) + L-cysteine + ATP = L-cysteinyl-tRNA(Cys) + AMP + diphosphate. This is Cysteine--tRNA ligase from Lacticaseibacillus casei (strain BL23) (Lactobacillus casei).